Consider the following 305-residue polypeptide: MANSRILNDTAIDGQIEETTAWKDFLSLIKIGIVNSNLITTFTGMWLALHISGLSFLGNLNTVLLTLIGSSLIIAGSCAVNNYYDRDIDHLMERTKVRPTVTGKIQPNQALWSGILLIALGLIMLLMTTVMAAVIGFIGVFTYVVLYTMWTKRRYTINTVVGSVSGAVPPLIGWTAVEGHIGVVAWVLFMILFIWQIPHFLALAIKKTEDYRAANIPMLPVVHGFEVTKRQIIVWVACLLPLPFFLGSLGLPIVILGTLLNVGWLVLGLMGFRMKNIMKWATLMFVYSLNYMTIYFVAMVVFTLF.

Transmembrane regions (helical) follow at residues L38–G58, L60–V80, I115–I135, I157–V177, I181–L201, V236–L256, and F285–F305.

The protein belongs to the UbiA prenyltransferase family. Protoheme IX farnesyltransferase subfamily. As to quaternary structure, interacts with CtaA.

It is found in the cell membrane. The enzyme catalyses heme b + (2E,6E)-farnesyl diphosphate + H2O = Fe(II)-heme o + diphosphate. Its pathway is porphyrin-containing compound metabolism; heme O biosynthesis; heme O from protoheme: step 1/1. Its function is as follows. Converts heme B (protoheme IX) to heme O by substitution of the vinyl group on carbon 2 of heme B porphyrin ring with a hydroxyethyl farnesyl side group. This chain is Protoheme IX farnesyltransferase 2, found in Bacillus velezensis (strain DSM 23117 / BGSC 10A6 / LMG 26770 / FZB42) (Bacillus amyloliquefaciens subsp. plantarum).